Consider the following 223-residue polypeptide: MHQRLATLAAARLYLCTDARRERGDLAEFADAALAGGVDVIQLRDKGSPGEQRFGPLEARDELAACEILADAARRHGALFAVNDRADIARAAGADVLHLGQGDLPLEVARAFVGPDVLLGLSSHDRDQMAAAAAGPADYFCVGPCWPTPTKPGRAAPGLALVRAAAELHTGKPWFAIGGIDAQRLPEVLDAGARRVVVVRAITAADDPAAAARRLSSALAAAR.

4-amino-2-methyl-5-(diphosphooxymethyl)pyrimidine contacts are provided by residues 42–46 (QLRDK) and Asn-83. The Mg(2+) site is built by Asp-84 and Asp-103. Ser-122 contacts 4-amino-2-methyl-5-(diphosphooxymethyl)pyrimidine. Residue 148–150 (TPT) coordinates 2-[(2R,5Z)-2-carboxy-4-methylthiazol-5(2H)-ylidene]ethyl phosphate. Lys-151 is a 4-amino-2-methyl-5-(diphosphooxymethyl)pyrimidine binding site. A 2-[(2R,5Z)-2-carboxy-4-methylthiazol-5(2H)-ylidene]ethyl phosphate-binding site is contributed by Gly-179.

Belongs to the thiamine-phosphate synthase family. The cofactor is Mg(2+).

It catalyses the reaction 2-[(2R,5Z)-2-carboxy-4-methylthiazol-5(2H)-ylidene]ethyl phosphate + 4-amino-2-methyl-5-(diphosphooxymethyl)pyrimidine + 2 H(+) = thiamine phosphate + CO2 + diphosphate. The enzyme catalyses 2-(2-carboxy-4-methylthiazol-5-yl)ethyl phosphate + 4-amino-2-methyl-5-(diphosphooxymethyl)pyrimidine + 2 H(+) = thiamine phosphate + CO2 + diphosphate. The catalysed reaction is 4-methyl-5-(2-phosphooxyethyl)-thiazole + 4-amino-2-methyl-5-(diphosphooxymethyl)pyrimidine + H(+) = thiamine phosphate + diphosphate. The protein operates within cofactor biosynthesis; thiamine diphosphate biosynthesis; thiamine phosphate from 4-amino-2-methyl-5-diphosphomethylpyrimidine and 4-methyl-5-(2-phosphoethyl)-thiazole: step 1/1. Functionally, condenses 4-methyl-5-(beta-hydroxyethyl)thiazole monophosphate (THZ-P) and 2-methyl-4-amino-5-hydroxymethyl pyrimidine pyrophosphate (HMP-PP) to form thiamine monophosphate (TMP). The chain is Thiamine-phosphate synthase from Mycolicibacterium paratuberculosis (strain ATCC BAA-968 / K-10) (Mycobacterium paratuberculosis).